Here is a 948-residue protein sequence, read N- to C-terminus: ATPase 8, plasma membrane-type (948 aa).

Topologically, residues 1 to 64 are cytoplasmic; it reads MATEFSWDEI…EKSENKFLKF (64 aa). A helical membrane pass occupies residues 65-84; it reads LGFMWNPLSWVMESAAIMAI. At 85–96 the chain is on the extracellular side; the sequence is VLANGGGKAPDW. Residues 97–117 form a helical membrane-spanning segment; the sequence is QDFIGIMVLLIINSTISFIEE. Over 118–246 the chain is Cytoplasmic; the sequence is NNAGNAAAAL…GHFQKVLTSI (129 aa). The helical transmembrane segment at 247–267 threads the bilayer; sequence GNFCICSIGLGMLIEILIMYP. At 268–276 the chain is on the extracellular side; that stretch reads IQHRTYRDG. A helical transmembrane segment spans residues 277-294; sequence IDNLLVLLIGGIPIAMPT. The Cytoplasmic segment spans residues 295–646; that stretch reads VLSVTMAIGS…TSRAIFQRMK (352 aa). Aspartate 332 serves as the catalytic 4-aspartylphosphate intermediate. Residues aspartate 591 and aspartate 595 each contribute to the Mg(2+) site. The helical transmembrane segment at 647 to 668 threads the bilayer; the sequence is NYTIYAVSITIRIVLGFMLVAL. Topologically, residues 669–673 are extracellular; sequence IWRFD. A helical transmembrane segment spans residues 674–696; sequence FAPFMVLIIAILNDGTIMTISKD. The Cytoplasmic portion of the chain corresponds to 697 to 712; the sequence is RVKPSPVPDSWKLNEI. The helical transmembrane segment at 713–733 threads the bilayer; sequence FATGVVLGTYMALTTVLFFWL. Residues 734–754 lie on the Extracellular side of the membrane; the sequence is AHDTDFFSKTFGVRSIQGNEE. Residues 755-775 traverse the membrane as a helical segment; it reads ELMAALYLQVSIISQALIFVT. The Cytoplasmic segment spans residues 776-787; that stretch reads RSRSWSFVERPG. A helical transmembrane segment spans residues 788–808; sequence FLLLIAFVIAQLVATLIAVYA. At 809-816 the chain is on the extracellular side; that stretch reads NWGFARIV. Residues 817 to 837 form a helical membrane-spanning segment; sequence GCGWGWAGGIWVYSIITYIPL. At 838 to 948 the chain is on the cytoplasmic side; it reads DILKFIIRYA…IDTIQQHYTV (111 aa). Phosphothreonine is present on threonine 884. Serine 930 bears the Phosphoserine mark. Positions 946–948 are interaction with 14-3-3 proteins; sequence YTV. A Phosphothreonine modification is found at threonine 947.

Belongs to the cation transport ATPase (P-type) (TC 3.A.3) family. Type IIIA subfamily. Binds to 14-3-3 proteins. The binding is induced by phosphorylation of Thr-947. Binding to 14-3-3 proteins activates the H(+)-ATPase. As to expression, expressed in guard cells, roots and leaves, and barely in mesophyll cells.

Its subcellular location is the membrane. It carries out the reaction ATP + H2O + H(+)(in) = ADP + phosphate + 2 H(+)(out). Functionally, the plasma membrane H(+) ATPase of plants and fungi generates a proton gradient that drives the active transport of nutrients by H(+)-symport. The resulting external acidification and/or internal alkinization may mediate growth responses. This is ATPase 8, plasma membrane-type (AHA8) from Arabidopsis thaliana (Mouse-ear cress).